A 184-amino-acid chain; its full sequence is Ribosome-recycling factor (184 aa).

The segment at 137 to 158 is disordered; that stretch reads DSIKAKQKDGIPEDEAKRGQDE.

The protein belongs to the RRF family.

Its subcellular location is the cytoplasm. Functionally, responsible for the release of ribosomes from messenger RNA at the termination of protein biosynthesis. May increase the efficiency of translation by recycling ribosomes from one round of translation to another. This chain is Ribosome-recycling factor, found in Desulforamulus reducens (strain ATCC BAA-1160 / DSM 100696 / MI-1) (Desulfotomaculum reducens).